The following is a 289-amino-acid chain: tRNA pseudouridine synthase B (289 aa).

Aspartate 38 (nucleophile) is an active-site residue.

It belongs to the pseudouridine synthase TruB family. Type 1 subfamily.

It catalyses the reaction uridine(55) in tRNA = pseudouridine(55) in tRNA. Responsible for synthesis of pseudouridine from uracil-55 in the psi GC loop of transfer RNAs. The polypeptide is tRNA pseudouridine synthase B (Clostridium kluyveri (strain ATCC 8527 / DSM 555 / NBRC 12016 / NCIMB 10680 / K1)).